Here is a 608-residue protein sequence, read N- to C-terminus: MIVKMKKVLLLTLSKYKKESLEILRDFGAVHINSCNKNSDSLKKSIDDRRILMQAFSLLKEDGGVKALKSSNGNFLDIAKSIVNLGNEIKEFQDIKRSLLHERNLISVWGNFSLENIDELKESNIYIQFFKIQKSEYKNLLRDPNVNVLLIKNVKNTSYFVSVGEFEQKIEIADEFKFNFDLDYINNKLKVVDEILDQKLTQISLFNKYIDILRDEIKNYDQIVEFEQVLADMQTDXEDFSYITGFVPAESQESLKNAVLKAGFAAQFADPEENDIIPTYIKRKGIANLAAPIFNILETIPGYKERDISFIFMLFFFVFFGMIIGDAAYGVIFFLIGILLSLSFLLKGKPLTPFHGLIFYLSVSSILYGAMTGTWFGSPLILEMFPILNSFKVSYLTEKNSVQNIIFICFSIGVLQISLAHVWNFFRQVKEKPHIHSIAQIGWLMCIVGLYYLVLNLILSQSRFPMYNVVYNVIYFGVALVFVFGKQDGSNFFKCILKSFGGIIEQFLTTVSGFADIISYIRLFAVGLAGLSISASFNTMSIPLLKSSNIGLIVAGIIVILFGHVLNIMLSLLSVIVHGVRLNMLEFSNHLGQEWSGCAYRPFKKMKK.

The next 9 membrane-spanning stretches (helical) occupy residues 308 to 325 (ISFI…MIIG), 327 to 346 (AAYG…SFLL), 356 to 376 (GLIF…GTWF), 405 to 425 (IIFI…VWNF), 438 to 458 (IAQI…LNLI), 464 to 484 (FPMY…VFVF), 495 to 515 (CILK…SGFA), 517 to 537 (IISY…SASF), and 550 to 570 (IGLI…NIML).

It belongs to the V-ATPase 116 kDa subunit family.

It localises to the cell membrane. In terms of biological role, produces ATP from ADP in the presence of a proton gradient across the membrane. The chain is V-type ATP synthase subunit I (atpI) from Borreliella burgdorferi (strain ATCC 35210 / DSM 4680 / CIP 102532 / B31) (Borrelia burgdorferi).